A 129-amino-acid polypeptide reads, in one-letter code: Ribosome-binding factor A (129 aa).

Belongs to the RbfA family. Monomer. Binds 30S ribosomal subunits, but not 50S ribosomal subunits or 70S ribosomes.

Its subcellular location is the cytoplasm. Its function is as follows. One of several proteins that assist in the late maturation steps of the functional core of the 30S ribosomal subunit. Associates with free 30S ribosomal subunits (but not with 30S subunits that are part of 70S ribosomes or polysomes). Required for efficient processing of 16S rRNA. May interact with the 5'-terminal helix region of 16S rRNA. The protein is Ribosome-binding factor A of Stutzerimonas stutzeri (strain A1501) (Pseudomonas stutzeri).